The chain runs to 336 residues: UPF0065 protein in tcbD-tcbE intergenic region (336 aa).

Positions 1–32 (MHSSKCPDLANIGRRRVLAGIALAMTTSSTRA) are cleaved as a signal peptide.

Belongs to the UPF0065 (bug) family.

It is found in the periplasm. In Pseudomonas sp. (strain P51), this protein is UPF0065 protein in tcbD-tcbE intergenic region.